An 81-amino-acid chain; its full sequence is Putative snRNP Sm-like protein (81 aa).

The Sm domain occupies 13–81; that stretch reads RPLDALGNSL…RGDNIVYISP (69 aa).

It belongs to the snRNP Sm proteins family.

This is Putative snRNP Sm-like protein from Methanothermobacter thermautotrophicus (strain ATCC 29096 / DSM 1053 / JCM 10044 / NBRC 100330 / Delta H) (Methanobacterium thermoautotrophicum).